The following is a 256-amino-acid chain: Ribonuclease 3-like protein 1 (256 aa).

An RNase III domain is found at 22–168 (AEVERALGGY…IVGAVYLDSK (147 aa)). The Mg(2+) site is built by Glu65, Asp154, and Glu157.

Requires Mg(2+) as cofactor. It depends on Mn(2+) as a cofactor.

Its function is as follows. Cleaves double-stranded RNA (dsRNA). The sequence is that of Ribonuclease 3-like protein 1 from Oryza sativa subsp. japonica (Rice).